Consider the following 499-residue polypeptide: Bifunctional purine biosynthesis protein PurH (499 aa).

One can recognise an MGS-like domain in the interval 1 to 144; that stretch reads MIKRALISVF…KNFQDVVVLT (144 aa).

Belongs to the PurH family.

It carries out the reaction (6R)-10-formyltetrahydrofolate + 5-amino-1-(5-phospho-beta-D-ribosyl)imidazole-4-carboxamide = 5-formamido-1-(5-phospho-D-ribosyl)imidazole-4-carboxamide + (6S)-5,6,7,8-tetrahydrofolate. The catalysed reaction is IMP + H2O = 5-formamido-1-(5-phospho-D-ribosyl)imidazole-4-carboxamide. Its pathway is purine metabolism; IMP biosynthesis via de novo pathway; 5-formamido-1-(5-phospho-D-ribosyl)imidazole-4-carboxamide from 5-amino-1-(5-phospho-D-ribosyl)imidazole-4-carboxamide (10-formyl THF route): step 1/1. The protein operates within purine metabolism; IMP biosynthesis via de novo pathway; IMP from 5-formamido-1-(5-phospho-D-ribosyl)imidazole-4-carboxamide: step 1/1. The polypeptide is Bifunctional purine biosynthesis protein PurH (Clostridium acetobutylicum (strain ATCC 824 / DSM 792 / JCM 1419 / IAM 19013 / LMG 5710 / NBRC 13948 / NRRL B-527 / VKM B-1787 / 2291 / W)).